The following is a 249-amino-acid chain: AA9 family lytic polysaccharide monooxygenase A (249 aa).

Positions 1-21 (MALSKIAALSTILASASLVAG) are cleaved as a signal peptide. His22 contributes to the Cu(2+) binding site. His22 carries the methylhistidine modification. 2 N-linked (GlcNAc...) asparagine glycosylation sites follow: Asn34 and Asn80. Disulfide bonds link Cys77–Cys199 and Cys118–Cys122. Residue His107 participates in Cu(2+) binding. Residues His185 and Gln194 each coordinate O2. A Cu(2+)-binding site is contributed by Tyr196.

Belongs to the polysaccharide monooxygenase AA9 family. Cu(2+) is required as a cofactor. The catalytically essential N-terminal histidine His-22 is post-translationally modified by methylation to prevent protonation of the histidine side chain, and protect the critical active site of the enzyme from oxidative damage.

It localises to the secreted. It carries out the reaction [(1-&gt;4)-beta-D-glucosyl]n+m + reduced acceptor + O2 = 4-dehydro-beta-D-glucosyl-[(1-&gt;4)-beta-D-glucosyl]n-1 + [(1-&gt;4)-beta-D-glucosyl]m + acceptor + H2O.. Functionally, lytic polysaccharide monooxygenase (LPMO) that exhibits a mixed C1/C4 oxidative cleavage activity on cellulose and xyloglucan. Catalysis by LPMOs requires the reduction of the active-site copper from Cu(II) to Cu(I) by a reducing agent and H(2)O(2) or O(2) as a cosubstrate. Shows a higher boosting effect with cellulases on the enzymatic saccharification of complex lignocellulosic substrates associated with xyloglucan than on the lignocellulosic substrates without xyloglucan. The oxidative cleavage of xyloglucan by LPMO9A may facilitate to open up the sterical hindrance of cellulose by xyloglucan and thereby increase accessibility for cellulase to lignocellulosic substrates. This Penicillium parvum (Eupenicillium parvum) protein is AA9 family lytic polysaccharide monooxygenase A.